The primary structure comprises 229 residues: Protein N-lysine methyltransferase METTL21D (229 aa).

A2 is subject to N-acetylalanine. S8 is subject to Phosphoserine. S-adenosyl-L-methionine-binding positions include W43, 75–77, D96, W126, A143, and Y148; that span reads GSG.

Belongs to the methyltransferase superfamily. METTL21 family. Interacts with ALKBH6. Interacts with ASPSCR1 and UBXN6; interaction with ASPSCR1, but not with UBXN6, enhances VCP methylation.

The protein localises to the cytoplasm. The catalysed reaction is L-lysyl-[protein] + 3 S-adenosyl-L-methionine = N(6),N(6),N(6)-trimethyl-L-lysyl-[protein] + 3 S-adenosyl-L-homocysteine + 3 H(+). Functionally, protein N-lysine methyltransferase that specifically trimethylates 'Lys-315' of VCP/p97; this modification may decrease VCP ATPase activity. This is Protein N-lysine methyltransferase METTL21D (VCPKMT) from Homo sapiens (Human).